Reading from the N-terminus, the 161-residue chain is Putative pre-16S rRNA nuclease (161 aa).

Belongs to the YqgF nuclease family.

It localises to the cytoplasm. Its function is as follows. Could be a nuclease involved in processing of the 5'-end of pre-16S rRNA. The sequence is that of Putative pre-16S rRNA nuclease from Bradyrhizobium sp. (strain BTAi1 / ATCC BAA-1182).